The sequence spans 109 residues: Spermidine export protein MdtI (109 aa).

The next 4 membrane-spanning stretches (helical) occupy residues Phe6–Leu26, Trp36–Val56, Ala64–Phe84, and Leu88–Leu108.

The protein belongs to the drug/metabolite transporter (DMT) superfamily. Small multidrug resistance (SMR) (TC 2.A.7.1) family. MdtI subfamily. As to quaternary structure, forms a complex with MdtJ.

Its subcellular location is the cell inner membrane. Catalyzes the excretion of spermidine. The sequence is that of Spermidine export protein MdtI from Yersinia pseudotuberculosis serotype O:1b (strain IP 31758).